Here is a 266-residue protein sequence, read N- to C-terminus: Thymidylate synthase (266 aa).

A dUMP-binding site is contributed by Arg24. Residue His54 participates in (6R)-5,10-methylene-5,6,7,8-tetrahydrofolate binding. DUMP is bound at residue 129–130; sequence RR. Cys149 (nucleophile) is an active-site residue. DUMP is bound by residues 169 to 172, Asn180, and 210 to 212; these read RSAD and HIY. Residue Asp172 participates in (6R)-5,10-methylene-5,6,7,8-tetrahydrofolate binding. Ala265 is a (6R)-5,10-methylene-5,6,7,8-tetrahydrofolate binding site.

It belongs to the thymidylate synthase family. Bacterial-type ThyA subfamily. In terms of assembly, homodimer.

It is found in the cytoplasm. It carries out the reaction dUMP + (6R)-5,10-methylene-5,6,7,8-tetrahydrofolate = 7,8-dihydrofolate + dTMP. It participates in pyrimidine metabolism; dTTP biosynthesis. In terms of biological role, catalyzes the reductive methylation of 2'-deoxyuridine-5'-monophosphate (dUMP) to 2'-deoxythymidine-5'-monophosphate (dTMP) while utilizing 5,10-methylenetetrahydrofolate (mTHF) as the methyl donor and reductant in the reaction, yielding dihydrofolate (DHF) as a by-product. This enzymatic reaction provides an intracellular de novo source of dTMP, an essential precursor for DNA biosynthesis. In Mycolicibacterium paratuberculosis (strain ATCC BAA-968 / K-10) (Mycobacterium paratuberculosis), this protein is Thymidylate synthase.